We begin with the raw amino-acid sequence, 352 residues long: MFAAATKSFVKQVGDGGRLVPVPSLSEADKYQPLSLVVKKKRCFLFPRYKFTSTPFTLKDILLGDREISAGISSYQLLNYEDESDVSLYGRRGNHIVNDVGINVAGSDSIAVKASFGIVTKHEVEVSTLLKEITTRKINFDHSLIRQSRSSRKAVLCVVMESIRTTRQCSLSVHAGIRGEAMRFHFMDEQNPKGRDKAIVFPAHTTIAFSVFELFIYLDGAFDLCVTSVSKGGFEREETATFALLYRLRNILFERNRRVMDVISRSQLYLDDLFSDYYDKPLSMTDISLKEGTHIRVNLLNHNIPKGPCILCGMGNFKRETVYGCFQCSVDGQKYVRLHAVPCFDIWHKRMK.

Belongs to the gasdermin family. As to quaternary structure, interacts with MAP1LC3B; interaction is direct. Interacts with IQGAP1. Interacts with ROCK2. Interacts with TRIOBP.

The protein localises to the peroxisome membrane. Its subcellular location is the cell projection. It localises to the cilium. In terms of biological role, peroxisome-associated protein required to protect auditory hair cells against noise-induced damage. Acts by regulating noise-induced peroxisome proliferation in auditory hair cells and neurons, and promoting autophagic degradation of damaged peroxisomes (pexophagy). Noise overexposure increases reactive oxygen species (ROS) levels, causing oxidative damage to auditory hair cells and resulting in hearing loss. PJVK acts as a ROS sensor that recruits the autophagy machinery to trigger pexophagy of peroxisomes damaged by oxidative stress. In addition to pexophagy, also required to promote peroxisome proliferation in response to sound overstimulation. The sequence is that of Pejvakin from Homo sapiens (Human).